A 115-amino-acid chain; its full sequence is Aspartate 1-decarboxylase (115 aa).

The active-site Schiff-base intermediate with substrate; via pyruvic acid is Ser-25. Ser-25 is modified (pyruvic acid (Ser)). Residue Thr-57 coordinates substrate. The active-site Proton donor is Tyr-58. 71-73 is a substrate binding site; that stretch reads GAA.

It belongs to the PanD family. Heterooctamer of four alpha and four beta subunits. Pyruvate serves as cofactor. Post-translationally, is synthesized initially as an inactive proenzyme, which is activated by self-cleavage at a specific serine bond to produce a beta-subunit with a hydroxyl group at its C-terminus and an alpha-subunit with a pyruvoyl group at its N-terminus.

The protein localises to the cytoplasm. The catalysed reaction is L-aspartate + H(+) = beta-alanine + CO2. It participates in cofactor biosynthesis; (R)-pantothenate biosynthesis; beta-alanine from L-aspartate: step 1/1. Its function is as follows. Catalyzes the pyruvoyl-dependent decarboxylation of aspartate to produce beta-alanine. This chain is Aspartate 1-decarboxylase, found in Campylobacter curvus (strain 525.92).